The sequence spans 87 residues: Small ribosomal subunit protein bS20 (87 aa).

The protein belongs to the bacterial ribosomal protein bS20 family.

Its function is as follows. Binds directly to 16S ribosomal RNA. This chain is Small ribosomal subunit protein bS20, found in Geobacter sulfurreducens (strain ATCC 51573 / DSM 12127 / PCA).